Reading from the N-terminus, the 179-residue chain is Large ribosomal subunit protein uL5 (179 aa).

It belongs to the universal ribosomal protein uL5 family. As to quaternary structure, part of the 50S ribosomal subunit; part of the 5S rRNA/L5/L18/L25 subcomplex. Contacts the 5S rRNA and the P site tRNA. Forms a bridge to the 30S subunit in the 70S ribosome.

Functionally, this is one of the proteins that bind and probably mediate the attachment of the 5S RNA into the large ribosomal subunit, where it forms part of the central protuberance. In the 70S ribosome it contacts protein S13 of the 30S subunit (bridge B1b), connecting the 2 subunits; this bridge is implicated in subunit movement. Contacts the P site tRNA; the 5S rRNA and some of its associated proteins might help stabilize positioning of ribosome-bound tRNAs. The sequence is that of Large ribosomal subunit protein uL5 from Alcanivorax borkumensis (strain ATCC 700651 / DSM 11573 / NCIMB 13689 / SK2).